The primary structure comprises 257 residues: Spindlin-2C (257 aa).

The interval 1–47 (MKTPHKKGAAKEQMGEGVGHHIGSTTIKKKKASQKRQRSRSSSRRSI) is disordered. Basic residues predominate over residues 27 to 43 (IKKKKASQKRQRSRSSS). 3 tudor-like domain regions span residues 48–97 (VGCR…LELH), 127–176 (IGKA…YQLL), and 208–253 (IGKH…YDLV). 2 histone H3K4me3 and H3R8me2a binding regions span residues Glu-136 and 244–246 (DFH).

The protein belongs to the SPIN/STSY family. Interacts with C11orf84/SPINDOC.

It is found in the nucleus. May be involved in the regulation of cell cycle progression. Exhibits H3K4me3-binding activity. The polypeptide is Spindlin-2C (Spin2c) (Mus musculus (Mouse)).